The chain runs to 521 residues: Tigger transposable element-derived protein 6 (521 aa).

Residues 3-54 (NKGNKKRRQFSLEEKMKVVGAVDSGKRKGDVAKEFGITPSTLSTFLKDRTKF) enclose the HTH psq-type domain. 2 DNA-binding regions (H-T-H motif) span residues 30-50 (KGDVAKEFGITPSTLSTFLKD) and 99-130 (SVIRKKALNLANMLGYDNFQASVGWLNRFRDR). The 72-residue stretch at 66–137 (QRKRMRSALY…RDRHGIALKA (72 aa)) folds into the HTH CENPB-type domain. The DDE-1 domain maps to 170–372 (YSPDDIFNAD…VKPSTVVKCW (203 aa)).

It belongs to the tigger transposable element derived protein family.

It localises to the nucleus. This is Tigger transposable element-derived protein 6 (TIGD6) from Homo sapiens (Human).